Consider the following 918-residue polypeptide: MASTWKPAEDYVLQLATLLQNCMSPNPEIRNNAMEAMENFQLQPEFLNYLCYILIEGESDDVLKQHYSLQDLQNNRATAGMLLKNSMLGGNNLIKSNSHDLGYVKSNIIHGLYNSNNNLVSNVTGIVITTLFSTYYRQHRDDPTGLQMLYQLLELTSNGNEPSIKALSKIMEDSAQFFQLEWSGNTKPMEALLDSFFRFISNPNFSPVIRSESVKCINTVIPLQTQSFIVRLDKFLEIIFQLAQNDENDLVRAQICISFSFLLEFRPDKLVSHLDGIVQFMLHLITTVNEEKVAIEACEFLHAFATSPNIPEHILQPYVKDIVPILLSKMVYNEESIVLLEASNDDDAFLEDKDEDIKPIAPRIVKKKEAGNGEDADDNEDDDDDDDDEDGDVDTQWNLRKCSAATLDVMTNILPHQVMDIAFPFLREHLGSDRWFIREATILALGAMAEGGMKYFNDGLPALIPFLVEQLNDKWAPVRKMTCWTLSRFSPWILQDHTEFLIPVLEPIINTLMDKKKDVQEAAISSVAVFIENADSELVETLFYSQLLTSFDKCLKYYKKKNLIILYDAIGRFAEKCALDETAMQIILPPLIEKWALLSDSDKELWPLLECLSCVASSLGERFMPMAPEVYNRAFRILCHCVELEAKSHQDPTIVVPEKDFIITSLDLIDGLVQGLGAHSQDLLFPQGTKDLTILKIMLECLQDPVHEVRQSCFALLGDIVYFFNSELVIGNLEDFLKLIGTEIMHNDDSDGTPAVINAIWALGLISERIDLNTYIIDMSRIILDLFTTNTQIVDSSVMENLSVTIGKMGLTHPEVFSSGAFANDSNWNKWCLSVNALDDVEEKSSAYMGFLKIINLTSTEVTMSNDTIHKIVTGLSSNVEANVFAQEIYTFLMNHSAQISAINFTPDEISFLQQFTS.

18 HEAT repeats span residues 11–38, 43–92, 103–137, 145–181, 190–222, 235–263, 275–303, 320–413, 421–449, 461–488, 501–534, 542–577, 583–620, 628–678, 694–725, 777–814, 825–858, and 867–900; these read YVLQ…EAME, QPEF…GGNN, YVKS…TYYR, GLQM…FQLE, EALL…TVIP, FLEI…SFLL, DGIV…FLHA, KDIV…MTNI, IAFP…GAMA, PALI…TLSR, LIPV…IENA, LFYS…AEKC, AMQI…SSLG, PEVY…GLGA, ILKI…YFFN, IDMS…LTHP, DSNW…INLT, and DTIH…SAQI. The tract at residues 361–395 is disordered; it reads APRIVKKKEAGNGEDADDNEDDDDDDDDEDGDVDT. The segment covering 372–393 has biased composition (acidic residues); that stretch reads NGEDADDNEDDDDDDDDEDGDV.

It belongs to the importin beta family. Importin beta-2 subfamily. As to quaternary structure, interacts with Ran (GSP1); interacts specifically with the GTP-bound form of Ran (GTP-Ran), protecting it from GTP hydrolysis and nucleotide exchange. Interacts with nucleoporins NUP1, NUP100 and NUP116. Interacts with NAB2 and HRP1/NAB4; via their rg-NLS. Interacts with TFG2; via its PY-NLS.

It localises to the cytoplasm. It is found in the nucleus. The protein localises to the nuclear pore complex. Functionally, functions in nuclear protein import as nuclear transport receptor. Serves as receptor for arginine/glycine-rich nuclear localization signals (rg-NLS) and PY-NLS in cargo substrates. Its predominant cargo substrate seems to be mRNA-binding proteins. Required for nuclear transport of NAB2, HRP1/NAB4 and TFG2. Mediates docking of the importin/substrate complex to the nuclear pore complex (NPC) through binding to repeat-containing nucleoporins. The complex is subsequently translocated through the pore by an energy requiring, Ran-dependent mechanism. At the nucleoplasmic side of the NPC, GTP-Ran binding leads to release of the cargo. Efficient GTP-Ran-mediated substrate release requires RNA. The importin is re-exported from the nucleus to the cytoplasm where GTP hydrolysis releases Ran from importin. The directionality of nuclear import is thought to be conferred by an asymmetric distribution of the GTP- and GDP-bound forms of Ran between the cytoplasm and nucleus. The chain is Importin subunit beta-2 from Saccharomyces cerevisiae (strain ATCC 204508 / S288c) (Baker's yeast).